The chain runs to 452 residues: MNSGISQVFQRELTCPICLNYFIDPVTIDCGHSFCRPCFYLNWQDIPILTQCFECLKTTQQRNLKTNIRLKKMASRARKASLWLFLSSEEQMCGTHRETKKIFCEVDRSLLCLLCSSSLEHRYHRHCPAEWAAEEHREKLLKKMQSLWEKVCENQRNLNVETTRISHWKDYVNVRLEAIRAEYQKMPAFHHEEEKHNLEMLKKKGKDIFHRLHLSKAKMAHRREILRGTYAELMKMCHKPDVELLQAFGDILHRSESVLLHMPQPLNLELRAGPITGLRDRLNQFRVDITLPHNEANSHIFRRGDLRSICIGCDRQNAPHITATPTSFLAWGAQTFTSGKYYWEVHVGDSWNWAFGVCNKYWKGTNQNGNIHGEEGLFSLGCVKNDIQCSLFTTSPLTLQYVPRPTNHVGLFLDCEARTVSFVDVNQSSPIHTIPNCSFSPPLRPIFCCVHL.

The RING-type zinc finger occupies 15–56 (CPICLNYFIDPVTIDCGHSFCRPCFYLNWQDIPILTQCFECL). The B box-type zinc finger occupies 88-129 (SEEQMCGTHRETKKIFCEVDRSLLCLLCSSSLEHRYHRHCPA). The Zn(2+) site is built by cysteine 93, histidine 96, cysteine 115, and histidine 121. The B30.2/SPRY domain occupies 269 to 452 (ELRAGPITGL…LRPIFCCVHL (184 aa)).

The protein belongs to the TRIM/RBCC family.

This is Tripartite motif-containing protein 49D from Homo sapiens (Human).